The chain runs to 707 residues: MAP kinase-interacting serine/threonine-protein kinase mnk-1 (707 aa).

The span at 1–24 (MFFLDNTDSMTSSSRGITMPNTIS) shows a compositional bias: polar residues. Disordered stretches follow at residues 1 to 29 (MFFL…HEDV) and 101 to 131 (RQRE…YVGR). The Protein kinase domain occupies 203–493 (KLTDEHLGSG…ADQILSHRWL (291 aa)). ATP is bound by residues 209 to 217 (LGSGAYGSV) and lysine 232. The active-site Proton acceptor is the aspartate 325. Disordered regions lie at residues 589–628 (RSGE…SADD) and 688–707 (FEDE…QVNV).

This sequence belongs to the protein kinase superfamily. CAMK Ser/Thr protein kinase family. The cofactor is Mg(2+). Expressed in pharynx, intestine, vulva and body wall muscles.

The protein localises to the nucleus. The protein resides in the cytoplasm. The enzyme catalyses L-seryl-[protein] + ATP = O-phospho-L-seryl-[protein] + ADP + H(+). It carries out the reaction L-threonyl-[protein] + ATP = O-phospho-L-threonyl-[protein] + ADP + H(+). Serine/threonine-protein kinase which is required in the germline to positively regulate lifespan. May play a role in body wall muscle contraction. May be involved in embryonic cytokinesis. The chain is MAP kinase-interacting serine/threonine-protein kinase mnk-1 from Caenorhabditis elegans.